The primary structure comprises 440 residues: MRLSRYFLPILKENPKEAEIVSHRLMLRAGMIRQQSAGIYSWLPLGKRVLDKVNKIIREEQNRAGAIELLMPTLQTAELWQESGRYDDYGKEMLRIKDRQDRQMLYGPTNEEMITDIFRSYVKSYKNLPLNLYHIQLKFRDEVRPRFGTMRSREFLMKDAYSFDLTKEDAIHSYNKMFVAYLRTFERLGLRAIPMRADTGPIGGNHSHEFIILADTGESEVFCHKSFLDRAIPAESTDFDDVAALQGVFDEWTADYAATSEMHDDAAYDAIPEGERLSARGIEVGHIFYFGTKYSEPMGAKVQGKDGKEHPVHMGSYGIGPTRLVPAIIEASHDENGIIWPASVAPFDVVIINMKAGDAACDAACEKLYYQLSNAGKDVLYDDTDDRAGQKFATADLIGVPVQIIVGPRSVANGEVEVKDRKTGERETVTIEAAMNKALG.

This sequence belongs to the class-II aminoacyl-tRNA synthetase family. ProS type 2 subfamily. Homodimer.

It is found in the cytoplasm. It catalyses the reaction tRNA(Pro) + L-proline + ATP = L-prolyl-tRNA(Pro) + AMP + diphosphate. Functionally, catalyzes the attachment of proline to tRNA(Pro) in a two-step reaction: proline is first activated by ATP to form Pro-AMP and then transferred to the acceptor end of tRNA(Pro). The protein is Proline--tRNA ligase of Agrobacterium fabrum (strain C58 / ATCC 33970) (Agrobacterium tumefaciens (strain C58)).